A 142-amino-acid polypeptide reads, in one-letter code: Large ribosomal subunit protein uL11 (142 aa).

This sequence belongs to the universal ribosomal protein uL11 family. As to quaternary structure, part of the ribosomal stalk of the 50S ribosomal subunit. Interacts with L10 and the large rRNA to form the base of the stalk. L10 forms an elongated spine to which L12 dimers bind in a sequential fashion forming a multimeric L10(L12)X complex. In terms of processing, one or more lysine residues are methylated.

Its function is as follows. Forms part of the ribosomal stalk which helps the ribosome interact with GTP-bound translation factors. The chain is Large ribosomal subunit protein uL11 from Haemophilus influenzae (strain 86-028NP).